Consider the following 122-residue polypeptide: Conotoxin flf14.2 (122 aa).

The first 22 residues, 1–22, serve as a signal peptide directing secretion; that stretch reads MGFRVLVLIVMVTTSALPFTFS. The propeptide occupies 23–96; the sequence is EESGRSPFRP…AESPVGQKRW (74 aa). The interval 53–91 is disordered; it reads RADGQPSDMRQPEMRRPEMRRPEVRRPEVRQPEFAESPV. Over residues 62-85 the composition is skewed to basic and acidic residues; the sequence is RQPEMRRPEMRRPEVRRPEVRQPE. Intrachain disulfides connect Cys101-Cys121 and Cys105-Cys117.

Belongs to the conotoxin R superfamily. As to expression, expressed by the venom duct.

The protein localises to the secreted. This chain is Conotoxin flf14.2, found in Conus anabathrum floridanus (Florida cone).